Reading from the N-terminus, the 434-residue chain is Serine--tRNA ligase (434 aa).

237-239 (TAE) provides a ligand contact to L-serine. ATP is bound at residue 268–270 (RAE). Position 291 (Glu291) interacts with L-serine. Residue 358-361 (EISS) participates in ATP binding. Ser393 is a binding site for L-serine.

The protein belongs to the class-II aminoacyl-tRNA synthetase family. Type-1 seryl-tRNA synthetase subfamily. In terms of assembly, homodimer. The tRNA molecule binds across the dimer.

Its subcellular location is the cytoplasm. The enzyme catalyses tRNA(Ser) + L-serine + ATP = L-seryl-tRNA(Ser) + AMP + diphosphate + H(+). It carries out the reaction tRNA(Sec) + L-serine + ATP = L-seryl-tRNA(Sec) + AMP + diphosphate + H(+). It functions in the pathway aminoacyl-tRNA biosynthesis; selenocysteinyl-tRNA(Sec) biosynthesis; L-seryl-tRNA(Sec) from L-serine and tRNA(Sec): step 1/1. Its function is as follows. Catalyzes the attachment of serine to tRNA(Ser). Is also able to aminoacylate tRNA(Sec) with serine, to form the misacylated tRNA L-seryl-tRNA(Sec), which will be further converted into selenocysteinyl-tRNA(Sec). In Rhodopseudomonas palustris (strain BisB5), this protein is Serine--tRNA ligase.